Here is a 509-residue protein sequence, read N- to C-terminus: Oligo-1,6-glucosidase (509 aa).

Residue Asp198 is the Nucleophile of the active site. Catalysis depends on Glu254, which acts as the Proton donor.

The protein belongs to the glycosyl hydrolase 13 family.

It localises to the cytoplasm. The catalysed reaction is Hydrolysis of (1-&gt;6)-alpha-D-glucosidic linkages in some oligosaccharides produced from starch and glycogen by alpha-amylase, and in isomaltose.. The sequence is that of Oligo-1,6-glucosidase (malL) from Bacillus sp. (strain F5).